The sequence spans 360 residues: MALSRVCWARSAVWGSAVTPGHFVTRRLQLGRSGLAWGAPRSSKLHLSPKADVKNLMSYVVTKTKAINGKYHRFLGRHFPRFYVLYTIFMKGLQMLWADAKKARRIKTNMWKHNIKFHQLPYREMEHLRQFRQDVTKCLFLGIISIPPFANYLVFLLMYLFPRQLLIRHFWTPKQQTDFLDIYHAFRKQSHPEIISYLEKVIPLISDAGLRWRLTDLCTKIQRGTHPAIHDILALRECFSNHPLGMNQLQALHVKALSRAMLLTSYLPPPLLRHRLKTHTTVIHQLDKALAKLGIGQLTAQEVKSACYLRGLNSTHIGEDRCRTWLGEWLQISCSLKEAELSLLLHNVVLLSTNYLGTRR.

A required and sufficient for mitochondrial import region spans residues 1-110 (MALSRVCWAR…KKARRIKTNM (110 aa)). The Cytoplasmic portion of the chain corresponds to 1-137 (MALSRVCWAR…LRQFRQDVTK (137 aa)). A helical transmembrane segment spans residues 138 to 158 (CLFLGIISIPPFANYLVFLLM). The Mitochondrial intermembrane portion of the chain corresponds to 159-360 (YLFPRQLLIR…LSTNYLGTRR (202 aa)). The 175-residue stretch at 186 to 360 (FRKQSHPEII…LSTNYLGTRR (175 aa)) folds into the Letm1 RBD domain.

Interacts with BRI3BP. Interacts (via C-terminal) with SMARCA4; the interaction regulates transcriptional expression of thermogenic genes in brown adipose tissue. As to expression, kidney, liver, skeletal muscle, heart and brain. Overexpressed in various tumors including leukemia, lymphoma, and carcinomas of the breast, kidney, ovary, stomach, colon and uterine cervix.

The protein localises to the mitochondrion outer membrane. The protein resides in the nucleus. Its subcellular location is the mitochondrion inner membrane. Functionally, plays an essential role for mitochondrial structure and function, as well as thermogenesis of brown adipocytes. In brown adipose tissue also localizes in the nucleus where it interacts with the chromatin remodeler SMARCA4 to regulate thermogenic genes expression, such as UCP1. May regulate phagocytosis and inflammatory responses to lipopolysaccharide in macrophages. Involved in tumorigenesis and may function as a negative regulator of the p53/TP53. The sequence is that of LETM1 domain-containing protein 1 from Homo sapiens (Human).